The sequence spans 1108 residues: TBC1 domain family member 8B (1108 aa).

GRAM domains lie at leucine 143–serine 210 and glutamine 283–aspartate 351. Positions glycine 469–glycine 656 constitute a Rab-GAP TBC domain. In terms of domain architecture, EF-hand spans histidine 822–arginine 857. 4 residues coordinate Ca(2+): aspartate 835, asparagine 837, aspartate 839, and glutamate 846. Residues glycine 961–threonine 1059 form a disordered region. Residues serine 967 to proline 998 show a composition bias toward low complexity. The segment covering serine 1010–isoleucine 1024 has biased composition (polar residues). The segment covering threonine 1025–proline 1057 has biased composition (low complexity).

It is found in the cytoplasm. Its subcellular location is the cytosol. Functionally, involved in vesicular recycling, probably as a GTPase-activating protein for Rab family protein(s). The sequence is that of TBC1 domain family member 8B (tbc1d8b) from Danio rerio (Zebrafish).